The chain runs to 360 residues: Decorin (360 aa).

Residues 1–16 (MKATIIFLLLAQVSWA) form the signal peptide. Positions 17–30 (GPFQQRGLFDFMLE) are excised as a propeptide. Serine 34 carries an O-linked (Xyl...) (glycosaminoglycan) serine glycan. 2 disulfides stabilise this stretch: cysteine 55–cysteine 61 and cysteine 59–cysteine 68. 12 LRR repeats span residues 74 to 94 (DKVP…NNKI), 95 to 118 (TEIK…NNKI), 119 to 142 (SKIS…KNHL), 143 to 163 (KELP…ENEI), 164 to 187 (TKVR…TNPL), 188 to 213 (KSSG…DTNI), 214 to 234 (TTIP…GNKI), 235 to 258 (TKVD…FNSI), 259 to 282 (SAVD…NNKL), 283 to 305 (IKVP…NNNI), 306 to 335 (SAVG…SNPV), and 336 to 360 (QYWE…GNYK). Residue asparagine 212 is glycosylated (N-linked (GlcNAc...) asparagine). 2 N-linked (GlcNAc...) asparagine glycosylation sites follow: asparagine 263 and asparagine 304. Cysteine 314 and cysteine 347 are oxidised to a cystine.

This sequence belongs to the small leucine-rich proteoglycan (SLRP) family. SLRP class I subfamily. Binds to type I and type II collagen, fibronectin and TGF-beta. Forms a ternary complex with MFAP2 and ELN. Interacts with DPT. Post-translationally, the attached glycosaminoglycan chain can be either chondroitin sulfate or dermatan sulfate depending upon the tissue of origin.

Its subcellular location is the secreted. It is found in the extracellular space. The protein localises to the extracellular matrix. Its function is as follows. May affect the rate of fibrils formation. The protein is Decorin (DCN) of Equus caballus (Horse).